The primary structure comprises 573 residues: Protein phosphatase EYA3 (573 aa).

Methionine 1 carries the N-acetylmethionine modification. Disordered stretches follow at residues 1-46 and 236-296; these read MEEE…LASN and TYQS…DATS. Residues 20–46 show a composition bias toward polar residues; sequence SGEQTISQVSNPDVSDQKPETSSLASN. Positions 254 to 271 are enriched in low complexity; it reads LSSGDPSTSPSLSQTTPS. Serine 262 and serine 266 each carry phosphoserine. Aspartate 309 functions as the Nucleophile in the catalytic mechanism. Mg(2+) is bound by residues aspartate 309 and aspartate 311. Aspartate 311 acts as the Proton donor in catalysis. Phosphoserine occurs at positions 438 and 472. Position 537 (aspartate 537) interacts with Mg(2+).

The protein belongs to the HAD-like hydrolase superfamily. EYA family. As to quaternary structure, interacts with SIX1 and DACH1, and probably SIX2, SIX4, SIX5. Mg(2+) is required as a cofactor. Post-translationally, ser-266 phosphorylation is required for localization at sites of DNA damage and directing interaction with H2AX.

The protein localises to the cytoplasm. Its subcellular location is the nucleus. The enzyme catalyses O-phospho-L-tyrosyl-[protein] + H2O = L-tyrosyl-[protein] + phosphate. Functionally, tyrosine phosphatase that specifically dephosphorylates 'Tyr-142' of histone H2AX (H2AXY142ph). 'Tyr-142' phosphorylation of histone H2AX plays a central role in DNA repair and acts as a mark that distinguishes between apoptotic and repair responses to genotoxic stress. Promotes efficient DNA repair by dephosphorylating H2AX, promoting the recruitment of DNA repair complexes containing MDC1. Its function as histone phosphatase probably explains its role in transcription regulation during organogenesis. Coactivates SIX1, and seems to coactivate SIX2, SIX4 and SIX5. The repression of precursor cell proliferation in myoblasts by SIX1 is switched to activation through recruitment of EYA3 to the SIX1-DACH1 complex and seems to be dependent on EYA3 phosphatase activity. May be involved in development of the eye. The polypeptide is Protein phosphatase EYA3 (EYA3) (Homo sapiens (Human)).